A 140-amino-acid chain; its full sequence is 3-hydroxyacyl-[acyl-carrier-protein] dehydratase FabZ (140 aa).

H47 is an active-site residue.

The protein belongs to the thioester dehydratase family. FabZ subfamily.

The protein resides in the cytoplasm. The enzyme catalyses a (3R)-hydroxyacyl-[ACP] = a (2E)-enoyl-[ACP] + H2O. Involved in unsaturated fatty acids biosynthesis. Catalyzes the dehydration of short chain beta-hydroxyacyl-ACPs and long chain saturated and unsaturated beta-hydroxyacyl-ACPs. This Streptococcus gordonii (strain Challis / ATCC 35105 / BCRC 15272 / CH1 / DL1 / V288) protein is 3-hydroxyacyl-[acyl-carrier-protein] dehydratase FabZ.